We begin with the raw amino-acid sequence, 305 residues long: UDP-3-O-acyl-N-acetylglucosamine deacetylase (305 aa).

Zn(2+) contacts are provided by His-78, His-237, and Asp-241. The active-site Proton donor is the His-264.

The protein belongs to the LpxC family. Zn(2+) serves as cofactor.

It carries out the reaction a UDP-3-O-[(3R)-3-hydroxyacyl]-N-acetyl-alpha-D-glucosamine + H2O = a UDP-3-O-[(3R)-3-hydroxyacyl]-alpha-D-glucosamine + acetate. It functions in the pathway glycolipid biosynthesis; lipid IV(A) biosynthesis; lipid IV(A) from (3R)-3-hydroxytetradecanoyl-[acyl-carrier-protein] and UDP-N-acetyl-alpha-D-glucosamine: step 2/6. Functionally, catalyzes the hydrolysis of UDP-3-O-myristoyl-N-acetylglucosamine to form UDP-3-O-myristoylglucosamine and acetate, the committed step in lipid A biosynthesis. This is UDP-3-O-acyl-N-acetylglucosamine deacetylase from Paraburkholderia phymatum (strain DSM 17167 / CIP 108236 / LMG 21445 / STM815) (Burkholderia phymatum).